Reading from the N-terminus, the 318-residue chain is Thymidylate synthase (318 aa).

DUMP is bound by residues Arg-25 and 180-181 (RR). Residue Cys-200 is the Nucleophile of the active site. DUMP is bound by residues 220–223 (RSGD), Asn-231, and 261–263 (HIY). Asp-223 contributes to the (6R)-5,10-methylene-5,6,7,8-tetrahydrofolate binding site. Residue Ala-317 participates in (6R)-5,10-methylene-5,6,7,8-tetrahydrofolate binding.

Belongs to the thymidylate synthase family. Bacterial-type ThyA subfamily. Homodimer.

The protein resides in the cytoplasm. The enzyme catalyses dUMP + (6R)-5,10-methylene-5,6,7,8-tetrahydrofolate = 7,8-dihydrofolate + dTMP. It functions in the pathway pyrimidine metabolism; dTTP biosynthesis. Functionally, catalyzes the reductive methylation of 2'-deoxyuridine-5'-monophosphate (dUMP) to 2'-deoxythymidine-5'-monophosphate (dTMP) while utilizing 5,10-methylenetetrahydrofolate (mTHF) as the methyl donor and reductant in the reaction, yielding dihydrofolate (DHF) as a by-product. This enzymatic reaction provides an intracellular de novo source of dTMP, an essential precursor for DNA biosynthesis. The sequence is that of Thymidylate synthase from Bacillus cereus (strain ATCC 14579 / DSM 31 / CCUG 7414 / JCM 2152 / NBRC 15305 / NCIMB 9373 / NCTC 2599 / NRRL B-3711).